Consider the following 101-residue polypeptide: Eukaryotic translation initiation factor 4E-binding protein 3 (101 aa).

The disordered stretch occupies residues 1–28 (MSSSTSCPIPGCRDQLPDGYSTTPGGTL). The YXXXXLphi motif signature appears at 40–46 (YDRKFLL). The TOS motif motif lies at 97-101 (FEMDM).

The protein belongs to the eIF4E-binding protein family. As to quaternary structure, interacts with EIF4E. Interacts with RPA2 (via N-terminus); the interaction enhances EIF4EBP3-mediated inhibition of EIF4E-mediated mRNA nuclear export. Phosphorylated.

It is found in the cytoplasm. The protein resides in the nucleus. In terms of biological role, repressor of translation initiation that regulates EIF4E activity by preventing its assembly into the eIF4F complex: the hypophosphorylated form competes with EIF4G1/EIF4G3 and strongly binds to EIF4E, leading to repression of translation. In contrast, the hyperphosphorylated form dissociates from EIF4E, allowing interaction between EIF4G1/EIF4G3 and EIF4E, leading to initiation of translation. Inhibits EIF4E-mediated mRNA nuclear export. This is Eukaryotic translation initiation factor 4E-binding protein 3 (Eif4ebp3) from Mus musculus (Mouse).